Reading from the N-terminus, the 283-residue chain is Elongation factor Ts (283 aa).

An involved in Mg(2+) ion dislocation from EF-Tu region spans residues 80-83 (TDFV).

This sequence belongs to the EF-Ts family.

It localises to the cytoplasm. In terms of biological role, associates with the EF-Tu.GDP complex and induces the exchange of GDP to GTP. It remains bound to the aminoacyl-tRNA.EF-Tu.GTP complex up to the GTP hydrolysis stage on the ribosome. The chain is Elongation factor Ts from Klebsiella pneumoniae (strain 342).